We begin with the raw amino-acid sequence, 337 residues long: Anthranilate phosphoribosyltransferase (337 aa).

Residues Gly-82, 85–86 (GD), Thr-90, 92–95 (NIST), 110–118 (KHGGRSVSS), and Ser-122 contribute to the 5-phospho-alpha-D-ribose 1-diphosphate site. Residue Gly-82 coordinates anthranilate. Residue Ser-94 coordinates Mg(2+). Arg-168 provides a ligand contact to anthranilate. Mg(2+) is bound by residues Asp-226 and Glu-227.

The protein belongs to the anthranilate phosphoribosyltransferase family. Homodimer. Mg(2+) is required as a cofactor.

The catalysed reaction is N-(5-phospho-beta-D-ribosyl)anthranilate + diphosphate = 5-phospho-alpha-D-ribose 1-diphosphate + anthranilate. The protein operates within amino-acid biosynthesis; L-tryptophan biosynthesis; L-tryptophan from chorismate: step 2/5. In terms of biological role, catalyzes the transfer of the phosphoribosyl group of 5-phosphorylribose-1-pyrophosphate (PRPP) to anthranilate to yield N-(5'-phosphoribosyl)-anthranilate (PRA). In Francisella tularensis subsp. novicida (strain U112), this protein is Anthranilate phosphoribosyltransferase.